A 98-amino-acid polypeptide reads, in one-letter code: uncharacterized protein (98 aa).

This is an uncharacterized protein from Homo sapiens (Human).